Consider the following 568-residue polypeptide: Sulfate adenylyltransferase (568 aa).

The segment at 1–162 is N-terminal; that stretch reads MANSPHGGVL…IEAVNKLNHY (162 aa). Positions 163–388 are catalytic; the sequence is DYVALRYSPA…LRESSPPRAT (226 aa). A sulfate-binding site is contributed by Gln-190. Residues 190 to 193 and 284 to 287 each bind ATP; these read QTRN and GRDH. Catalysis depends on residues Thr-191, Arg-192, and Asn-193. Arg-192 is a binding site for sulfate. Ala-288 is a binding site for sulfate. Val-326 contacts ATP. The tract at residues 389 to 568 is allosteric regulation domain; adenylyl-sulfate kinase-like; sequence QGFTIFLTGY…LESEGYFDRL (180 aa). 3'-phosphoadenylyl sulfate contacts are provided by residues 428–431, Arg-445, 471–472, and Arg-510; these read DTVR and IA.

The protein in the N-terminal section; belongs to the sulfate adenylyltransferase family. It in the C-terminal section; belongs to the APS kinase family. As to quaternary structure, homohexamer. Dimer of trimers.

It localises to the cytoplasm. It catalyses the reaction sulfate + ATP + H(+) = adenosine 5'-phosphosulfate + diphosphate. Its pathway is sulfur metabolism; hydrogen sulfide biosynthesis; sulfite from sulfate: step 1/3. With respect to regulation, allosterically inhibited by 3'-phosphoadenosine 5'-phosphosulfate (PAPS). Its function is as follows. Catalyzes the first intracellular reaction of sulfate assimilation, forming adenosine-5'-phosphosulfate (APS) from inorganic sulfate and ATP. Plays an important role in sulfate activation as a component of the biosynthesis pathway of sulfur-containing amino acids. This is Sulfate adenylyltransferase from Aspergillus terreus.